Consider the following 739-residue polypeptide: Nucleoprotein (739 aa).

A coiled-coil region spans residues 334–363 (VNVGEQYQQLREAATEAEKQLQQYAESREL). Positions 415-646 (PKTSGHYDDD…QDSDNTQPEH (232 aa)) are disordered. Low complexity-rich tracts occupy residues 449–458 (SQDTTIPDVV) and 504–514 (KGGQQKNSQKG). Residues 520 to 530 (RQTQSRPTQNV) are compositionally biased toward polar residues. Residues 567–579 (EEADPLDDADDET) show a composition bias toward acidic residues. Positions 611 to 638 (YRDHSEKRELPQDEQQDQDHTQEARNQD) are enriched in basic and acidic residues.

It belongs to the filoviruses nucleoprotein family. In terms of assembly, homooligomer. Homomultimerizes to form the nucleocapsid. Binds to viral genomic RNA. Interacts with VP35 and VP30 to form the nucleocapsid. Interacts with host PPP2R5C; this interaction leads to VP30 dephosphorylation and viral transcription. Interacts with VP24; this interaction facilitates nucleocapsid assembly and genome packaging. Interacts with matrix protein VP40; this interaction allows recruitment of the nucleocapsid into progeny virions. Interacts with host STAU1. Interacts with host NXF1 (via RNA-binding domain); this interaction recruits NXF1 to the inclusion bodies were viral replication takes place, probably to export viral mRNA-NXF1 complexes from these sites. Interacts with host CCDC92; this interaction sequesters NP in the host cytoplasm. Interacts with host TRIM14. Phosphorylated and O-glycosylated by host. Acetylated by host EP300 in vitro.

It is found in the virion. The protein localises to the host cytoplasm. Functionally, oligomerizes into helical capsid to encapsidate the viral genome, protecting it from nucleases and the cellular innate immune response. VP35 binds to and stabilizes monomeric NP, keeping it soluble. Upon virus replication, NP is recruited to bind cooperatively viral genomic RNA and VP35 is released. The encapsidated genomic RNA is termed the nucleocapsid and serves as template for transcription and replication. The nucleocapsid is helical with a pitch of 10.81 NP per turn and a diameter of about 22nm. Each NP binds to six nucleotides of viral genomic RNA, three being exposed to the solvant and three hidden into the nucleocapsid. Also recruits host PPP2R5C phosphatase to dephosphorylate VP30 and thereby promote viral transcription. Upon virion assembly and budding, NP binds to VP24 and possibly host STAU1. This Epomops franqueti (Franquet's epauletted fruit bat) protein is Nucleoprotein (NP).